We begin with the raw amino-acid sequence, 392 residues long: Queuine tRNA-ribosyltransferase (392 aa).

The Proton acceptor role is filled by D93. Substrate contacts are provided by residues 93-97, D147, Q189, and G216; that span reads DSGGY. An RNA binding region spans residues 247–253; that stretch reads GVGAPED. The Nucleophile role is filled by D266. Residues 271-275 are RNA binding; important for wobble base 34 recognition; sequence TRVAR. C304, C306, C309, and H335 together coordinate Zn(2+).

Belongs to the queuine tRNA-ribosyltransferase family. Homodimer. Within each dimer, one monomer is responsible for RNA recognition and catalysis, while the other monomer binds to the replacement base PreQ1. Zn(2+) is required as a cofactor.

It catalyses the reaction 7-aminomethyl-7-carbaguanine + guanosine(34) in tRNA = 7-aminomethyl-7-carbaguanosine(34) in tRNA + guanine. The protein operates within tRNA modification; tRNA-queuosine biosynthesis. In terms of biological role, catalyzes the base-exchange of a guanine (G) residue with the queuine precursor 7-aminomethyl-7-deazaguanine (PreQ1) at position 34 (anticodon wobble position) in tRNAs with GU(N) anticodons (tRNA-Asp, -Asn, -His and -Tyr). Catalysis occurs through a double-displacement mechanism. The nucleophile active site attacks the C1' of nucleotide 34 to detach the guanine base from the RNA, forming a covalent enzyme-RNA intermediate. The proton acceptor active site deprotonates the incoming PreQ1, allowing a nucleophilic attack on the C1' of the ribose to form the product. After dissociation, two additional enzymatic reactions on the tRNA convert PreQ1 to queuine (Q), resulting in the hypermodified nucleoside queuosine (7-(((4,5-cis-dihydroxy-2-cyclopenten-1-yl)amino)methyl)-7-deazaguanosine). The sequence is that of Queuine tRNA-ribosyltransferase from Dehalococcoides mccartyi (strain ATCC BAA-2266 / KCTC 15142 / 195) (Dehalococcoides ethenogenes (strain 195)).